A 315-amino-acid polypeptide reads, in one-letter code: MNQHTDNQQLPPAILLMGPTASGKTALAIELCQALPCEIISVDSALIYKGMDIGTAKPTAEELAQAPHRLIDILDPVQSYSVAEFRRDALAAMQDITQRGRIPLLVGGTMMYYKALTDGLSTLPQADPLVRAEIEKQAEKNGWQALHQELQGIDPVSAQRIHPNDPQRLSRALEIYRISGKSMTELSLNKQPSAPYQFSQFAIAPSDRHILHDRIAQRFDIMLNSGFEDEVIELKSRADLHLDLPSMRCVGYRQMWQYLDGENIYQEMREKGLAATRQLAKRQLTWLRSWQNLHWLDTFSKDNLTNVMKLSRIRT.

18–25 (GPTASGKT) is a binding site for ATP. 20-25 (TASGKT) contributes to the substrate binding site. Interaction with substrate tRNA regions lie at residues 43–46 (DSAL), 167–171 (QRLSR), and 248–253 (RCVGYR).

This sequence belongs to the IPP transferase family. As to quaternary structure, monomer. Mg(2+) is required as a cofactor.

The catalysed reaction is adenosine(37) in tRNA + dimethylallyl diphosphate = N(6)-dimethylallyladenosine(37) in tRNA + diphosphate. Functionally, catalyzes the transfer of a dimethylallyl group onto the adenine at position 37 in tRNAs that read codons beginning with uridine, leading to the formation of N6-(dimethylallyl)adenosine (i(6)A). This chain is tRNA dimethylallyltransferase, found in Pseudoalteromonas atlantica (strain T6c / ATCC BAA-1087).